A 473-amino-acid chain; its full sequence is Ornithine aminotransferase, mitochondrial (473 aa).

A mitochondrion-targeting transit peptide spans methionine 1–alanine 32. N6-(pyridoxal phosphate)lysine is present on lysine 293.

It belongs to the class-III pyridoxal-phosphate-dependent aminotransferase family. Homotetramer. Requires pyridoxal 5'-phosphate as cofactor.

It is found in the mitochondrion matrix. It catalyses the reaction a 2-oxocarboxylate + L-ornithine = L-glutamate 5-semialdehyde + an L-alpha-amino acid. Its pathway is amino-acid biosynthesis; L-proline biosynthesis; L-glutamate 5-semialdehyde from L-ornithine: step 1/1. Its function is as follows. Confers drought and oxidative stress tolerance mainly through enhancing ROS-scavenging capacity and Pro pre-accumulation. The chain is Ornithine aminotransferase, mitochondrial (OAT) from Oryza sativa subsp. japonica (Rice).